The primary structure comprises 219 residues: Protein OPG170 (219 aa).

A signal peptide spans 1-16; sequence MYSLVFVILMCIPFSF. N-linked (GlcNAc...) asparagine; by host glycosylation occurs at asparagine 70.

The protein belongs to the orthopoxvirus OPG170 family.

It is found in the secreted. May interact with several cellular chemokines to interfere with chemokine-glycosaminoglycan (GAG) interactions at the cell surface to alter chemotaxis of nearby responsive cells. This is Protein OPG170 (OPG170) from Bos taurus (Bovine).